The following is a 294-amino-acid chain: MKTKIIVIVGPTAVGKTALAIEVAKRFNGEVVSGDSQQVYRGLDIGTAKASPEEQAAVPHHLIDVREITESYSAFDFVSEAKMTIEDIQSRGKLAIIAGGTGLYIQSLLEGYHLGGETPHEEILAYRASLEPYSDEELAHLVEQAGLEIPQFNRRRAMRALEIAHFGQDLENQEILYEPLIICLDDERSQLYERINHRVDLMFEAGLLDEAKWLFDHSPNVQAAKGIGYKELFPYFRGEQTFEEARESLKQATRRFAKRQLTWFRNRMQVTFYQIGESGVQDRILSQIEEFLDD.

10-17 (GPTAVGKT) contacts ATP. Residue 12–17 (TAVGKT) participates in substrate binding. Residues 35-38 (DSQQ) are interaction with substrate tRNA.

Belongs to the IPP transferase family. Monomer. Mg(2+) is required as a cofactor.

It carries out the reaction adenosine(37) in tRNA + dimethylallyl diphosphate = N(6)-dimethylallyladenosine(37) in tRNA + diphosphate. Catalyzes the transfer of a dimethylallyl group onto the adenine at position 37 in tRNAs that read codons beginning with uridine, leading to the formation of N6-(dimethylallyl)adenosine (i(6)A). This Streptococcus pneumoniae (strain ATCC 700669 / Spain 23F-1) protein is tRNA dimethylallyltransferase.